We begin with the raw amino-acid sequence, 159 residues long: Ribosome maturation factor RimP (159 aa).

This sequence belongs to the RimP family.

It localises to the cytoplasm. In terms of biological role, required for maturation of 30S ribosomal subunits. This is Ribosome maturation factor RimP from Lacticaseibacillus casei (strain BL23) (Lactobacillus casei).